Reading from the N-terminus, the 328-residue chain is 4-hydroxy-3-methylbut-2-enyl diphosphate reductase (328 aa).

C13 contributes to the [4Fe-4S] cluster binding site. Residues H41 and H75 each coordinate (2E)-4-hydroxy-3-methylbut-2-enyl diphosphate. Positions 41 and 75 each coordinate dimethylallyl diphosphate. Residues H41 and H75 each coordinate isopentenyl diphosphate. [4Fe-4S] cluster is bound at residue C97. A (2E)-4-hydroxy-3-methylbut-2-enyl diphosphate-binding site is contributed by H125. H125 lines the dimethylallyl diphosphate pocket. Isopentenyl diphosphate is bound at residue H125. The active-site Proton donor is E127. T168 contacts (2E)-4-hydroxy-3-methylbut-2-enyl diphosphate. [4Fe-4S] cluster is bound at residue C229. The (2E)-4-hydroxy-3-methylbut-2-enyl diphosphate site is built by S257, S258, N259, and S306. Positions 257, 258, 259, and 306 each coordinate dimethylallyl diphosphate. Isopentenyl diphosphate-binding residues include S257, S258, N259, and S306.

Belongs to the IspH family. The cofactor is [4Fe-4S] cluster.

It carries out the reaction isopentenyl diphosphate + 2 oxidized [2Fe-2S]-[ferredoxin] + H2O = (2E)-4-hydroxy-3-methylbut-2-enyl diphosphate + 2 reduced [2Fe-2S]-[ferredoxin] + 2 H(+). The catalysed reaction is dimethylallyl diphosphate + 2 oxidized [2Fe-2S]-[ferredoxin] + H2O = (2E)-4-hydroxy-3-methylbut-2-enyl diphosphate + 2 reduced [2Fe-2S]-[ferredoxin] + 2 H(+). It participates in isoprenoid biosynthesis; dimethylallyl diphosphate biosynthesis; dimethylallyl diphosphate from (2E)-4-hydroxy-3-methylbutenyl diphosphate: step 1/1. It functions in the pathway isoprenoid biosynthesis; isopentenyl diphosphate biosynthesis via DXP pathway; isopentenyl diphosphate from 1-deoxy-D-xylulose 5-phosphate: step 6/6. Functionally, catalyzes the conversion of 1-hydroxy-2-methyl-2-(E)-butenyl 4-diphosphate (HMBPP) into a mixture of isopentenyl diphosphate (IPP) and dimethylallyl diphosphate (DMAPP). Acts in the terminal step of the DOXP/MEP pathway for isoprenoid precursor biosynthesis. This Chlorobium phaeobacteroides (strain DSM 266 / SMG 266 / 2430) protein is 4-hydroxy-3-methylbut-2-enyl diphosphate reductase.